Here is a 116-residue protein sequence, read N- to C-terminus: Large ribosomal subunit protein bL17 (116 aa).

This sequence belongs to the bacterial ribosomal protein bL17 family. In terms of assembly, part of the 50S ribosomal subunit. Contacts protein L32.

This Helicobacter hepaticus (strain ATCC 51449 / 3B1) protein is Large ribosomal subunit protein bL17.